We begin with the raw amino-acid sequence, 427 residues long: 3-phosphoshikimate 1-carboxyvinyltransferase (427 aa).

Residues Lys-20, Ser-21, and Arg-25 each coordinate 3-phosphoshikimate. Residue Lys-20 coordinates phosphoenolpyruvate. Phosphoenolpyruvate contacts are provided by Gly-92 and Arg-120. Positions 166, 168, 312, and 339 each coordinate 3-phosphoshikimate. Gln-168 provides a ligand contact to phosphoenolpyruvate. The active-site Proton acceptor is the Asp-312. Residues Arg-343 and Arg-385 each contribute to the phosphoenolpyruvate site.

Belongs to the EPSP synthase family. In terms of assembly, monomer.

The protein localises to the cytoplasm. The catalysed reaction is 3-phosphoshikimate + phosphoenolpyruvate = 5-O-(1-carboxyvinyl)-3-phosphoshikimate + phosphate. It participates in metabolic intermediate biosynthesis; chorismate biosynthesis; chorismate from D-erythrose 4-phosphate and phosphoenolpyruvate: step 6/7. In terms of biological role, catalyzes the transfer of the enolpyruvyl moiety of phosphoenolpyruvate (PEP) to the 5-hydroxyl of shikimate-3-phosphate (S3P) to produce enolpyruvyl shikimate-3-phosphate and inorganic phosphate. The protein is 3-phosphoshikimate 1-carboxyvinyltransferase of Streptococcus pyogenes serotype M28 (strain MGAS6180).